The following is a 123-amino-acid chain: MPTIEQLVRKGRRGKPKKSKTLALKGSPLRRGVCTRVYTTTPKKPNSALRKVARVRLSSGIEVTAYIPGEGHNLQEHSIVLVRGGRVKDLPGVRYHIVRGALDTQGVKDRKQGRSLYGAKKAK.

D89 is subject to 3-methylthioaspartic acid.

This sequence belongs to the universal ribosomal protein uS12 family. Part of the 30S ribosomal subunit. Contacts proteins S8 and S17. May interact with IF1 in the 30S initiation complex.

Functionally, with S4 and S5 plays an important role in translational accuracy. In terms of biological role, interacts with and stabilizes bases of the 16S rRNA that are involved in tRNA selection in the A site and with the mRNA backbone. Located at the interface of the 30S and 50S subunits, it traverses the body of the 30S subunit contacting proteins on the other side and probably holding the rRNA structure together. The combined cluster of proteins S8, S12 and S17 appears to hold together the shoulder and platform of the 30S subunit. This Bifidobacterium animalis subsp. lactis (strain AD011) protein is Small ribosomal subunit protein uS12.